The chain runs to 484 residues: Suppressor of fused homolog (484 aa).

The interval 1 to 21 (MAELRPSVAPGPAAPPASGPS) is disordered. Residues 12-21 (PAAPPASGPS) are compositionally biased toward pro residues. Lysine 257 participates in a covalent cross-link: Glycyl lysine isopeptide (Lys-Gly) (interchain with G-Cter in ubiquitin). Positions 279–360 (SRPPEDEEDS…SSTAIIPHEL (82 aa)) are disordered. A Phosphoserine modification is found at serine 301. The residue at position 303 (lysine 303) is an N6-acetyllysine. Residue lysine 321 forms a Glycyl lysine isopeptide (Lys-Gly) (interchain with G-Cter in SUMO2) linkage. Residues 336–347 (THDRAPSRKDSL) are compositionally biased toward basic and acidic residues. Phosphoserine is present on residues serine 342, serine 346, and serine 352. A Phosphothreonine modification is found at threonine 353. The residue at position 481 (serine 481) is a Phosphoserine.

Belongs to the SUFU family. In terms of assembly, may form homodimers. Interacts with ULK3; inactivating the protein kinase activity of ULK3. Interacts with RAB23. Part of a DNA-bound corepressor complex containing SAP18, GLI1 and SIN3. Part of a complex containing CTNNB1. Binds BTRC, GLI2, GLI3, SAP18 and STK36. Binds both free and DNA-bound GLI1. Interacts with KIF7. Interacts with GLI3FL and this interaction regulates the formation of either repressor or activator forms of GLI3. Its association with GLI3FL is regulated by Hh signaling and dissociation of the SUFU-GLI3 interaction requires the presence of the ciliary motor KIF3A. Polyubiquitinated at Lys-257 by the SCF(FBXL17) complex, leading to its subsequent degradation and allowing the release of GLI1 for proper hedgehog/smoothened signal transduction. Ubiquitination is impaired by phosphorylation at Ser-342, Ser-346, Ser-352 and Thr-353. Post-translationally, phosphorylation at Ser-342, Ser-346, Ser-352 and Thr-353 prevents ubiquitination by the SCF(FBXL17) complex. As to expression, widely expressed in adult and fetal tissues.

It localises to the cytoplasm. The protein localises to the nucleus. In terms of biological role, negative regulator in the hedgehog/smoothened signaling pathway. Down-regulates GLI1-mediated transactivation of target genes. Part of a corepressor complex that acts on DNA-bound GLI1. May also act by linking GLI1 to BTRC and thereby targeting GLI1 to degradation by the proteasome. Sequesters GLI1, GLI2 and GLI3 in the cytoplasm, this effect is overcome by binding of STK36 to both SUFU and a GLI protein. Negative regulator of beta-catenin signaling. Regulates the formation of either the repressor form (GLI3R) or the activator form (GLI3A) of the full-length form of GLI3 (GLI3FL). GLI3FL is complexed with SUFU in the cytoplasm and is maintained in a neutral state. Without the Hh signal, the SUFU-GLI3 complex is recruited to cilia, leading to the efficient processing of GLI3FL into GLI3R. When Hh signaling is initiated, SUFU dissociates from GLI3FL and the latter translocates to the nucleus, where it is phosphorylated, destabilized, and converted to a transcriptional activator (GLI3A). Required for normal embryonic development. Required for the proper formation of hair follicles and the control of epidermal differentiation. The polypeptide is Suppressor of fused homolog (Mus musculus (Mouse)).